Here is a 306-residue protein sequence, read N- to C-terminus: N-acetylmuramic acid 6-phosphate etherase (306 aa).

In terms of domain architecture, SIS spans 62–225 (IAQAFQNGGR…TTASMIRIGK (164 aa)). Glutamate 90 acts as the Proton donor in catalysis. The active site involves glutamate 121.

Belongs to the GCKR-like family. MurNAc-6-P etherase subfamily. Homodimer.

It catalyses the reaction N-acetyl-D-muramate 6-phosphate + H2O = N-acetyl-D-glucosamine 6-phosphate + (R)-lactate. It functions in the pathway amino-sugar metabolism; 1,6-anhydro-N-acetylmuramate degradation. The protein operates within amino-sugar metabolism; N-acetylmuramate degradation. It participates in cell wall biogenesis; peptidoglycan recycling. Its function is as follows. Specifically catalyzes the cleavage of the D-lactyl ether substituent of MurNAc 6-phosphate, producing GlcNAc 6-phosphate and D-lactate. Together with AnmK, is also required for the utilization of anhydro-N-acetylmuramic acid (anhMurNAc) either imported from the medium or derived from its own cell wall murein, and thus plays a role in cell wall recycling. This Vibrio atlanticus (strain LGP32) (Vibrio splendidus (strain Mel32)) protein is N-acetylmuramic acid 6-phosphate etherase.